The primary structure comprises 385 residues: tRNA (guanine-N(7)-)-methyltransferase non-catalytic subunit wuho (385 aa).

WD repeat units follow at residues 68–108, 155–194, and 198–236; these read KVEV…AKLL, GHLSIVYDILWTPDQKHIITSDRDDKIRVTNYPATFDIHS, and GHKEFVSGLALLTEEHLLSVSGDKTLRLWNYLSGMELLH.

This sequence belongs to the WD repeat TRM82 family. In terms of assembly, forms a heterodimer with the catalytic subunit Mettl1. Interacts with mei-P26 and weakly interacts with bgcn; required for the function or formation of the mei-P26-bgcn-bam-sxl complex. Interacts with nanos; may be involved in mei-P26-dependent derepression of the BMP signaling pathway. Interacts with Myc; the interaction may be mediated by mei-P26 and may be involved in the regulation of ribosome biogenesis. In testis, it is present at high level in hub cells, a niche for germline stem cells of testis. Ubiquitously expressed in all testicular cells throughout spermatogenesis. Ubiquitously expressed in all germline and somatic cells of the ovary.

Its subcellular location is the nucleus. The protein localises to the cytoplasm. It participates in tRNA modification; N(7)-methylguanine-tRNA biosynthesis. In terms of biological role, required for the Mettl1-dependent formation of N(7)-methylguanine at position 46 (m7G46) in tRNA. In the Mettl1-wuho methyltransferase complex, it is required to stabilize and induce conformational changes of the catalytic subunit. Required for binding of nanos mRNA and repression of translation by the mei-P26-bgcn-bam-sxl complex. May cooperate with mei-P26 and nanos to derepress the BMP signaling pathway. May cooperate with mei-P26 to suppress expression of a subset of microRNAs. May cooperate with mei-P26 to regulate bam expression levels in germline cells during gametogenesis. Required to promote mitosis to meiosis transition during gametogenesis. May regulate germline cell division in part by regulating ribosome biogenesis. This chain is tRNA (guanine-N(7)-)-methyltransferase non-catalytic subunit wuho, found in Drosophila grimshawi (Hawaiian fruit fly).